A 300-amino-acid polypeptide reads, in one-letter code: Geranylgeranyl pyrophosphate synthase (300 aa).

Met-1 bears the N-acetylmethionine mark. Isopentenyl diphosphate-binding residues include Lys-25, Arg-28, and His-57. The Mg(2+) site is built by Asp-64 and Asp-68. Arg-73 provides a ligand contact to dimethylallyl diphosphate. Residue Arg-74 coordinates isopentenyl diphosphate. Dimethylallyl diphosphate-binding residues include Lys-151, Thr-152, Gln-185, Lys-202, and Lys-212.

The protein belongs to the FPP/GGPP synthase family. As to quaternary structure, homohexamer; trimer of homodimers. Requires Mg(2+) as cofactor.

Its subcellular location is the cytoplasm. The protein resides in the perinuclear region. It is found in the myofibril. The protein localises to the sarcomere. It localises to the z line. The enzyme catalyses isopentenyl diphosphate + dimethylallyl diphosphate = (2E)-geranyl diphosphate + diphosphate. It catalyses the reaction isopentenyl diphosphate + (2E)-geranyl diphosphate = (2E,6E)-farnesyl diphosphate + diphosphate. It carries out the reaction isopentenyl diphosphate + (2E,6E)-farnesyl diphosphate = (2E,6E,10E)-geranylgeranyl diphosphate + diphosphate. Its pathway is isoprenoid biosynthesis; farnesyl diphosphate biosynthesis; farnesyl diphosphate from geranyl diphosphate and isopentenyl diphosphate: step 1/1. The protein operates within isoprenoid biosynthesis; geranyl diphosphate biosynthesis; geranyl diphosphate from dimethylallyl diphosphate and isopentenyl diphosphate: step 1/1. It functions in the pathway isoprenoid biosynthesis; geranylgeranyl diphosphate biosynthesis; geranylgeranyl diphosphate from farnesyl diphosphate and isopentenyl diphosphate: step 1/1. Its function is as follows. Catalyzes the trans-addition of the three molecules of IPP onto DMAPP to form geranylgeranyl pyrophosphate, an important precursor of carotenoids and geranylated proteins. This is Geranylgeranyl pyrophosphate synthase (Ggps1) from Rattus norvegicus (Rat).